The sequence spans 395 residues: Probable isocitrate dehydrogenase [NAD] gamma 2, mitochondrial (395 aa).

The N-terminal 25 residues, 1-25 (MLAAGSCSVRTILQPALLLGHSREV), are a transit peptide targeting the mitochondrion. Thr-117 lines the citrate pocket. The substrate site is built by Arg-133, Arg-164, and Asp-251. Asp-251 serves as a coordination point for Mn(2+). Asn-321 lines the ADP pocket.

The protein belongs to the isocitrate and isopropylmalate dehydrogenases family. As to quaternary structure, heterooligomer of subunits alpha (IDH3A), beta (IDH3B), and gamma (IDH3G) in the apparent ratio of 2:1:1. The heterodimer containing one IDH3A and one IDH3B subunit and the heterodimer containing one IDH3A and one IDH3G subunit assemble into a heterotetramer (which contains two subunits of IDH3A, one of IDH3B and one of IDH3G) and further into the heterooctamer. Requires Mg(2+) as cofactor. The cofactor is Mn(2+).

The protein resides in the mitochondrion. With respect to regulation, the heterotetramer and the heterodimer composed of IDH3A and IDH3G subunits can be allosterically activated by citrate (CIT) or/and ADP, and the two activators can act independently or synergistically. The heterodimer composed of IDH3A and IDH3B subunits cannot be allosterically regulated and the allosteric regulation of the heterotetramer is through the IDH3G subunit and not the IDH3B subunit. The IDH3G subunit contains the allosteric site which consists of a CIT-binding site and an ADP-binding site, and the binding of CIT and ADP causes conformational changes at the allosteric site which are transmitted to the active site in the catalytic subunit (IDH3A) through a cascade of conformational changes at the heterodimer interface, leading to stabilization of the isocitrate-binding at the active site and thus activation of the enzyme. ATP can activate the heterotetramer and the heterodimer composed of IDH3A and IDH3G subunits at low concentrations but inhibits their activities at high concentrations, whereas ATP exhibits only inhibitory effect on the heterodimer composed of IDH3A and IDH3B subunits. Its function is as follows. Regulatory subunit which plays a role in the allosteric regulation of the enzyme catalyzing the decarboxylation of isocitrate (ICT) into alpha-ketoglutarate. The heterodimer composed of the alpha (IDH3A) and beta (IDH3B) subunits and the heterodimer composed of the alpha (IDH3A) and gamma (IDH3G) subunits, have considerable basal activity but the full activity of the heterotetramer (containing two subunits of IDH3A, one of IDH3B and one of IDH3G) requires the assembly and cooperative function of both heterodimers. The protein is Probable isocitrate dehydrogenase [NAD] gamma 2, mitochondrial of Rattus norvegicus (Rat).